The primary structure comprises 65 residues: Photosystem II reaction center protein J (65 aa).

The helical transmembrane segment at 35 to 55 (LWLVATAGGIAVIFVLGIFFY) threads the bilayer.

Belongs to the PsbJ family. PSII is composed of 1 copy each of membrane proteins PsbA, PsbB, PsbC, PsbD, PsbE, PsbF, PsbH, PsbI, PsbJ, PsbK, PsbL, PsbM, PsbT, PsbX, PsbY, Psb30/Ycf12, peripheral proteins PsbO, CyanoQ (PsbQ), PsbU, PsbV and a large number of cofactors. It forms dimeric complexes.

The protein localises to the cellular thylakoid membrane. Functionally, one of the components of the core complex of photosystem II (PSII). PSII is a light-driven water:plastoquinone oxidoreductase that uses light energy to abstract electrons from H(2)O, generating O(2) and a proton gradient subsequently used for ATP formation. It consists of a core antenna complex that captures photons, and an electron transfer chain that converts photonic excitation into a charge separation. In Prochlorococcus marinus (strain MIT 9312), this protein is Photosystem II reaction center protein J.